We begin with the raw amino-acid sequence, 325 residues long: Large ribosomal subunit protein uL4m (325 aa).

The interval 113-158 is disordered; that stretch reads ASTKTRYEVHGSHKKMSPQKGTGNARRGTRQSPLMKGGGKTFGPKP.

This sequence belongs to the universal ribosomal protein uL4 family. As to quaternary structure, component of the mitochondrial large ribosomal subunit (mt-LSU). Mature N.crassa 74S mitochondrial ribosomes consist of a small (37S) and a large (54S) subunit. The 37S small subunit contains a 16S ribosomal RNA (16S mt-rRNA) and 32 different proteins. The 54S large subunit contains a 23S rRNA (23S mt-rRNA) and 42 different proteins.

The protein resides in the mitochondrion. In terms of biological role, component of the mitochondrial ribosome (mitoribosome), a dedicated translation machinery responsible for the synthesis of mitochondrial genome-encoded proteins, including at least some of the essential transmembrane subunits of the mitochondrial respiratory chain. The mitoribosomes are attached to the mitochondrial inner membrane and translation products are cotranslationally integrated into the membrane. In Neurospora crassa (strain ATCC 24698 / 74-OR23-1A / CBS 708.71 / DSM 1257 / FGSC 987), this protein is Large ribosomal subunit protein uL4m (yml6).